The chain runs to 354 residues: Protein RecA (354 aa).

Residue 67–74 (GPESSGKT) participates in ATP binding.

The protein belongs to the RecA family.

It is found in the cytoplasm. Functionally, can catalyze the hydrolysis of ATP in the presence of single-stranded DNA, the ATP-dependent uptake of single-stranded DNA by duplex DNA, and the ATP-dependent hybridization of homologous single-stranded DNAs. It interacts with LexA causing its activation and leading to its autocatalytic cleavage. The chain is Protein RecA from Pasteurella multocida (strain Pm70).